A 198-amino-acid chain; its full sequence is HTH-type transcriptional regulator BetI (198 aa).

Positions 8–68 (PLRRRELIDA…ATMRHLLREL (61 aa)) constitute an HTH tetR-type domain. The segment at residues 31–50 (TVAQIAHEAGVSPALAHHYF) is a DNA-binding region (H-T-H motif).

It functions in the pathway amine and polyamine biosynthesis; betaine biosynthesis via choline pathway [regulation]. Repressor involved in the biosynthesis of the osmoprotectant glycine betaine. It represses transcription of the choline transporter BetT and the genes of BetAB involved in the synthesis of glycine betaine. The chain is HTH-type transcriptional regulator BetI from Brucella abortus (strain 2308).